The following is a 401-amino-acid chain: Phosphoglycerate kinase (401 aa).

Substrate-binding positions include 24–26 (DFN), Arg-40, 63–66 (HFGR), Arg-122, and Arg-155. Residues Lys-206, Gly-297, Glu-328, and 357-360 (GGDS) contribute to the ATP site.

It belongs to the phosphoglycerate kinase family. In terms of assembly, monomer.

The protein resides in the cytoplasm. The enzyme catalyses (2R)-3-phosphoglycerate + ATP = (2R)-3-phospho-glyceroyl phosphate + ADP. It functions in the pathway carbohydrate degradation; glycolysis; pyruvate from D-glyceraldehyde 3-phosphate: step 2/5. This is Phosphoglycerate kinase from Synechococcus sp. (strain CC9605).